We begin with the raw amino-acid sequence, 226 residues long: Potassium/proton antiporter CemA (226 aa).

3 helical membrane-spanning segments follow: residues 7–27 (FTSL…SLSF), 111–131 (IICF…LFIL), and 186–206 (IISG…KYWI).

This sequence belongs to the CemA family.

It is found in the plastid. Its subcellular location is the chloroplast inner membrane. The enzyme catalyses K(+)(in) + H(+)(out) = K(+)(out) + H(+)(in). Contributes to K(+)/H(+) antiport activity by supporting proton efflux to control proton extrusion and homeostasis in chloroplasts in a light-dependent manner to modulate photosynthesis. Prevents excessive induction of non-photochemical quenching (NPQ) under continuous-light conditions. Indirectly promotes efficient inorganic carbon uptake into chloroplasts. The protein is Potassium/proton antiporter CemA of Buxus microphylla (Littleleaf boxwood).